The chain runs to 394 residues: Guanine nucleotide-binding protein G(s) subunit alpha isoforms short (394 aa).

Residues 1–23 form a disordered region; it reads MGCLGNSKTEDQRNEEKAQREAN. A lipid anchor (N-palmitoyl glycine) is attached at Gly-2. Residue Cys-3 is the site of S-palmitoyl cysteine attachment. Positions 8–23 are enriched in basic and acidic residues; the sequence is KTEDQRNEEKAQREAN. Residues 39–394 enclose the G-alpha domain; the sequence is ATHRLLLLGA…RMHLRQYELL (356 aa). The segment at 42-55 is G1 motif; it reads RLLLLGAGESGKST. Position 47-55 (47-55) interacts with GTP; that stretch reads GAGESGKST. Mg(2+) is bound at residue Ser-54. The tract at residues 68 to 91 is disordered; sequence FNGEGGEEDPQAARSNSDGEKATK. Residues 196–204 are G2 motif; sequence DLLRCRVLT. GTP contacts are provided by residues 197–204, 223–227, and 292–295; these read LLRCRVLT, DVGGQ, and NKQD. Thr-204 contributes to the Mg(2+) binding site. Residues 219-228 form a G3 motif region; sequence FHMFDVGGQR. The interval 288 to 295 is G4 motif; the sequence is ILFLNKQD. Lys-300 is covalently cross-linked (Glycyl lysine isopeptide (Lys-Gly) (interchain with G-Cter in ubiquitin)). Ser-352 is modified (phosphoserine). The tract at residues 364–369 is G5 motif; sequence TCAVDT. Ala-366 provides a ligand contact to GTP.

Belongs to the G-alpha family. G(s) subfamily. As to quaternary structure, heterotrimeric G proteins are composed of 3 units; alpha, beta and gamma. The alpha chain contains the guanine nucleotide binding site. Component of the TAS2R14-GNAS2 complex, consisting of TAS2R14, GNAS2, GNB1 and GNG2; within the complex interacts with TAS2R14; this complex plays a role in the perception of bitterness. Interacts with CRY1; the interaction may block GPCR-mediated regulation of cAMP concentrations. Interacts with ADCY6 and stimulates its adenylyl cyclase activity. Interacts with ADCY2 and ADCY5. Stimulates the ADCY5 adenylyl cyclase activity. Interacts (GDP-bound form) with RIC8B; promoting GNAS folding and association with the plasma membrane. Interaction with SASH1. Interacts with GASL2L2.

The protein localises to the cell membrane. It carries out the reaction GTP + H2O = GDP + phosphate + H(+). Guanine nucleotide-binding proteins (G proteins) function as transducers in numerous signaling pathways controlled by G protein-coupled receptors (GPCRs). The alpha chain contains the guanine nucleotide binding site and alternates between an active, GTP-bound state and an inactive, GDP-bound state. Signaling by an activated GPCR promotes GDP release and GTP binding. The alpha subunit has a low GTPase activity that converts bound GTP to GDP, thereby terminating the signal. Both GDP release and GTP hydrolysis are modulated by numerous regulatory proteins. Signaling involves the activation of adenylyl cyclases, resulting in increased levels of the signaling molecule cAMP. Functions downstream of beta-adrenergic receptors. Stimulates the Ras signaling pathway via RAPGEF2. This is Guanine nucleotide-binding protein G(s) subunit alpha isoforms short (GNAS) from Bos taurus (Bovine).